A 1167-amino-acid chain; its full sequence is Carbamoyl phosphate synthase large chain (1167 aa).

A carboxyphosphate synthetic domain region spans residues 1–455 (MPRRTDIKSI…SLQKALRGLE (455 aa)). R129, R221, G227, G228, E260, V262, E267, G293, V294, H295, Q337, and E351 together coordinate ATP. The region spanning 184–380 (LETRWNLGEG…IAKIAAKLAV (197 aa)) is the ATP-grasp 1 domain. Positions 337, 351, and 353 each coordinate Mg(2+). Mn(2+)-binding residues include Q337, E351, and N353. Residues 456–619 (TGLTGLDEIE…PFAGALANEA (164 aa)) are oligomerization domain. The interval 620–1031 (QVSSRKKVVI…AFAKSQLGAG (412 aa)) is carbamoyl phosphate synthetic domain. The 213-residue stretch at 748–960 (QKLLHKLGLS…IAKIAARIMA (213 aa)) folds into the ATP-grasp 2 domain. ATP-binding residues include R784, T844, L846, E851, G876, I877, H878, S879, Q919, and E931. Q919, E931, and N933 together coordinate Mg(2+). The Mn(2+) site is built by Q919, E931, and N933. In terms of domain architecture, MGS-like spans 1032–1167 (VDLPRSGTLF…EVRPLQEYFA (136 aa)). Positions 1032–1167 (VDLPRSGTLF…EVRPLQEYFA (136 aa)) are allosteric domain.

The protein belongs to the CarB family. Composed of two chains; the small (or glutamine) chain promotes the hydrolysis of glutamine to ammonia, which is used by the large (or ammonia) chain to synthesize carbamoyl phosphate. Tetramer of heterodimers (alpha,beta)4. Mg(2+) is required as a cofactor. Mn(2+) serves as cofactor.

It carries out the reaction hydrogencarbonate + L-glutamine + 2 ATP + H2O = carbamoyl phosphate + L-glutamate + 2 ADP + phosphate + 2 H(+). It catalyses the reaction hydrogencarbonate + NH4(+) + 2 ATP = carbamoyl phosphate + 2 ADP + phosphate + 2 H(+). The protein operates within amino-acid biosynthesis; L-arginine biosynthesis; carbamoyl phosphate from bicarbonate: step 1/1. It functions in the pathway pyrimidine metabolism; UMP biosynthesis via de novo pathway; (S)-dihydroorotate from bicarbonate: step 1/3. Large subunit of the glutamine-dependent carbamoyl phosphate synthetase (CPSase). CPSase catalyzes the formation of carbamoyl phosphate from the ammonia moiety of glutamine, carbonate, and phosphate donated by ATP, constituting the first step of 2 biosynthetic pathways, one leading to arginine and/or urea and the other to pyrimidine nucleotides. The large subunit (synthetase) binds the substrates ammonia (free or transferred from glutamine from the small subunit), hydrogencarbonate and ATP and carries out an ATP-coupled ligase reaction, activating hydrogencarbonate by forming carboxy phosphate which reacts with ammonia to form carbamoyl phosphate. The chain is Carbamoyl phosphate synthase large chain from Mesorhizobium japonicum (strain LMG 29417 / CECT 9101 / MAFF 303099) (Mesorhizobium loti (strain MAFF 303099)).